The primary structure comprises 270 residues: Glucan endo-1,3-beta-glucosidase (270 aa).

Positions M1–G18 are cleaved as a signal peptide. Positions L22–N270 constitute a GH16 domain. E137 functions as the Nucleophile in the catalytic mechanism. Residue E142 is the Proton donor of the active site.

This sequence belongs to the glycosyl hydrolase 16 family.

It localises to the secreted. It carries out the reaction Hydrolysis of (1-&gt;3)-beta-D-glucosidic linkages in (1-&gt;3)-beta-D-glucans.. Its activity is regulated as follows. Ca(2+) does not affect the enzyme activity nor the thermostability. Other cations, such as Mg(2+), Mn(2+), Cu(2+), Zn(2+), Ag(+) or Hg(2+) do not cause any serious adverse effect on the activity. Also no significant change in the activity in response to the addition of 1 mM EDTA. Its function is as follows. Hydrolyzes laminarin majorily to glucose (G1), laminaribiose (L2), laminaritriose (L3), laminaritetraose (L4) and laminaripentaose (L5). Hydrolyzes laminarioligosaccharides L3, L4, L5 and laminarihexaose (L6) to G1, L2 and L3. Hardly hydrolyzes L2. Does not hydrolyze lichenan, pustulan, carboxymethyl cellulose, locust bean gum or soluble starch. This chain is Glucan endo-1,3-beta-glucosidase, found in Cryptopygus antarcticus (Antarctic springtail).